The chain runs to 223 residues: Ribose-5-phosphate isomerase A (223 aa).

Residues 32–35 (TGST), 85–88 (DGAD), and 98–101 (KGGG) each bind substrate. Glu107 serves as the catalytic Proton acceptor. Residue Lys125 coordinates substrate.

It belongs to the ribose 5-phosphate isomerase family. As to quaternary structure, homodimer.

The enzyme catalyses aldehydo-D-ribose 5-phosphate = D-ribulose 5-phosphate. Its pathway is carbohydrate degradation; pentose phosphate pathway; D-ribose 5-phosphate from D-ribulose 5-phosphate (non-oxidative stage): step 1/1. In terms of biological role, catalyzes the reversible conversion of ribose-5-phosphate to ribulose 5-phosphate. In Pseudomonas aeruginosa (strain LESB58), this protein is Ribose-5-phosphate isomerase A.